A 293-amino-acid chain; its full sequence is Homoserine O-acetyltransferase (293 aa).

The Acyl-thioester intermediate role is filled by C141. Residues K162 and S190 each contribute to the substrate site. H234 functions as the Proton acceptor in the catalytic mechanism. Residue E236 is part of the active site. R248 is a binding site for substrate.

The protein belongs to the MetA family.

It is found in the cytoplasm. It catalyses the reaction L-homoserine + acetyl-CoA = O-acetyl-L-homoserine + CoA. It participates in amino-acid biosynthesis; L-methionine biosynthesis via de novo pathway; O-acetyl-L-homoserine from L-homoserine: step 1/1. Transfers an acetyl group from acetyl-CoA to L-homoserine, forming acetyl-L-homoserine. The chain is Homoserine O-acetyltransferase from Campylobacter jejuni subsp. jejuni serotype O:2 (strain ATCC 700819 / NCTC 11168).